We begin with the raw amino-acid sequence, 438 residues long: Aspartate--tRNA(Asp) ligase (438 aa).

Position 170 (Glu170) interacts with L-aspartate. An aspartate region spans residues 192 to 195 (QLYK). Arg214 is an L-aspartate binding site. ATP is bound by residues 214 to 216 (RAE), 222 to 224 (RHL), and Glu361. Mg(2+) is bound by residues Glu361 and Ser364. L-aspartate-binding residues include Ser364 and Arg368. Residue 409–412 (GAER) participates in ATP binding.

It belongs to the class-II aminoacyl-tRNA synthetase family. Type 2 subfamily. In terms of assembly, homodimer. Mg(2+) serves as cofactor.

Its subcellular location is the cytoplasm. The catalysed reaction is tRNA(Asp) + L-aspartate + ATP = L-aspartyl-tRNA(Asp) + AMP + diphosphate. Catalyzes the attachment of L-aspartate to tRNA(Asp) in a two-step reaction: L-aspartate is first activated by ATP to form Asp-AMP and then transferred to the acceptor end of tRNA(Asp). The polypeptide is Aspartate--tRNA(Asp) ligase (Pyrococcus horikoshii (strain ATCC 700860 / DSM 12428 / JCM 9974 / NBRC 100139 / OT-3)).